The chain runs to 416 residues: Tyrosine--tRNA ligase (416 aa).

Tyrosine 40 contributes to the L-tyrosine binding site. The 'HIGH' region signature appears at 45–54 (ATAKSLHVGS). Tyrosine 177 and glutamine 181 together coordinate L-tyrosine. The short motif at 237-241 (KMGKS) is the 'KMSKS' region element. ATP is bound at residue lysine 240. The 65-residue stretch at 351–415 (ISIVQLIVKS…GKKRHAMVQL (65 aa)) folds into the S4 RNA-binding domain.

Belongs to the class-I aminoacyl-tRNA synthetase family. TyrS type 1 subfamily. As to quaternary structure, homodimer.

The protein localises to the cytoplasm. It catalyses the reaction tRNA(Tyr) + L-tyrosine + ATP = L-tyrosyl-tRNA(Tyr) + AMP + diphosphate + H(+). Functionally, catalyzes the attachment of tyrosine to tRNA(Tyr) in a two-step reaction: tyrosine is first activated by ATP to form Tyr-AMP and then transferred to the acceptor end of tRNA(Tyr). The sequence is that of Tyrosine--tRNA ligase from Roseobacter denitrificans (strain ATCC 33942 / OCh 114) (Erythrobacter sp. (strain OCh 114)).